The primary structure comprises 675 residues: PTS system glucose-specific EIICBA component (675 aa).

In terms of domain architecture, PTS EIIC type-1 spans 3 to 414 (KKLFGQLQRI…FNFKTPGRED (412 aa)). The next 11 helical transmembrane spans lie at 16–36 (LMLP…GTAF), 59–79 (MMTG…ALGV), 81–101 (IGLA…FIIM), 126–146 (VLGI…GALA), 173–193 (IMMA…WPFI), 199–219 (AFST…FGFI), 273–293 (FMQG…LAIY), 303–323 (VVGG…ITEP), 328–348 (FLFV…LSFL), 355–375 (LHLG…GILP), and 378–398 (TPWW…YVVF). One can recognise a PTS EIIB type-1 domain in the interval 425–506 (SKLPFDVLDA…ARIMNGDITK (82 aa)). Cys447 (phosphocysteine intermediate; for EIIB activity) is an active-site residue. Residues 547–651 (DKVFSEKMMG…SVVTPVIITN (105 aa)) enclose the PTS EIIA type-1 domain. His599 serves as the catalytic Tele-phosphohistidine intermediate; for EIIA activity.

The protein resides in the cell membrane. The enzyme catalyses N(pros)-phospho-L-histidyl-[protein] + D-glucose(out) = D-glucose 6-phosphate(in) + L-histidyl-[protein]. Its function is as follows. The phosphoenolpyruvate-dependent sugar phosphotransferase system (sugar PTS), a major carbohydrate active transport system, catalyzes the phosphorylation of incoming sugar substrates concomitantly with their translocation across the cell membrane. This system is involved in glucose transport. This chain is PTS system glucose-specific EIICBA component (ptsG), found in Staphylococcus haemolyticus (strain JCSC1435).